Reading from the N-terminus, the 21-residue chain is Tertiapin (21 aa).

Disulfide bonds link Cys-3-Cys-14 and Cys-5-Cys-18.

In terms of processing, oxidation of Met-13 results in the loss of biological activity. Post-translationally, an amidation at Lys-21 is suggested in Ref.1. As to expression, expressed by the venom gland.

The protein localises to the secreted. Its function is as follows. Presynaptic neurotoxin that blocks the inwardly rectifying Kir1.1/KCNJ1 and Kir3.1/3.4 (KCNJ3/KCNJ5) potassium channels with high affinity by binding to the M1-M2 linker region of these channels in a 1:1 stoichiometry. It may block the potassium channel pore by occluding its alpha helix into the channel vestibule. Tertiapin-Q also inhibits calcium-activated large conductance BK-type (KCNMA) potassium channels in a concentration-, and voltage-dependent manner, in addition to inhibiting Kir3.1/3.2 (KCNJ3/KCNJ6) heteromultimers potassium channels. It can prevent dose-dependently acetylcholine(ACh)-induced atrioventricular blocks in mammalian hearts, as KCNJ3/KCNJ5 channels (also named I(KACh), because these channels are activated by ACh) are found in mammalian myocytes. Interacts specifically with calmodulin in the presence of calcium. In Apis mellifera (Honeybee), this protein is Tertiapin.